The chain runs to 687 residues: MERVNDASCGPSGCYTYQVSRHSTEMLHNLNQQRKNGGRFCDVLLRVGDESFPAHRAVLAACSEYFESVFSAQLGDGGAADGGPADVGGATAAPGGGAGGSRELEMHTISSKVFGDILDFAYTSRIVVRLESFPELMTAAKFLLMRSVIEICQEVIKQSNVQILVPPARADIMLFRPPGTSDLGFPLDMTNGAALAANSNGIAGSMQPEEEAARAAGAAIAGQASLPVLPGVDRLPMVAGPLSPQLLTSPFPSVASSAPPLTGKRGRGRPRKANLLDSMFGSPGGLREAGILPCGLCGKVFTDANRLRQHEAQHGVTSLQLGYIDLPPPRLGENGLPISEDPDGPRKRSRTRKQVACEICGKIFRDVYHLNRHKLSHSGEKPYSCPVCGLRFKRKDRMSYHVRSHDGSVGKPYICQSCGKGFSRPDHLNGHIKQVHTSERPHKCQTCNASFATRDRLRSHLACHEDKVPCQVCGKYLRAAYMADHLKKHSEGPSNFCSICNRGFSSASYLKVHVKTHHGVPLPQVSRHQEPILNGGAAFHCARTYGNKEGQKCSHQDPIESSDSYGDLSDASDLKTPEKQSANGSFSCDMAVPKNKMESDGEKKYPCPECGSFFRSKSYLNKHIQKVHVRALGGPLGDLGPALGSPFSPQQNMSLLESFGFQIVQSAFASSLVDPEVDQQPMGPEGK.

The 90-residue stretch at 41–130 (CDVLLRVGDE…AYTSRIVVRL (90 aa)) folds into the BTB domain. Lys112 is covalently cross-linked (Glycyl lysine isopeptide (Lys-Gly) (interchain with G-Cter in SUMO2)). Residues 250-260 (PFPSVASSAPP) are compositionally biased toward low complexity. The interval 250-278 (PFPSVASSAPPLTGKRGRGRPRKANLLDS) is disordered. Residues 264–276 (KRGRGRPRKANLL) constitute a DNA-binding region (a.T hook). Lys272 is covalently cross-linked (Glycyl lysine isopeptide (Lys-Gly) (interchain with G-Cter in SUMO2)). Ser282 is modified (phosphoserine). The C2H2-type 1 zinc finger occupies 292-314 (LPCGLCGKVFTDANRLRQHEAQH). A disordered region spans residues 332-351 (GENGLPISEDPDGPRKRSRT). 5 consecutive C2H2-type zinc fingers follow at residues 355–377 (VACE…KLSH), 383–405 (YSCP…VRSH), 413–436 (YICQ…KQVH), 442–464 (HKCQ…LACH), and 495–518 (NFCS…KTHH). Residues 549-558 (EGQKCSHQDP) are compositionally biased toward basic and acidic residues. The interval 549 to 603 (EGQKCSHQDPIESSDSYGDLSDASDLKTPEKQSANGSFSCDMAVPKNKMESDGEK) is disordered. The C2H2-type 7 zinc-finger motif lies at 605–628 (YPCPECGSFFRSKSYLNKHIQKVH).

This sequence belongs to the krueppel C2H2-type zinc-finger protein family. As to quaternary structure, homodimer. Interacts with RNF4. Interacts (via C-terminus) with TP53; this interaction inhibits TP53 ability to activate transcription. Ubiquitous.

Its subcellular location is the nucleus. In terms of biological role, transcriptional regulator that plays a role in many biological processes such as embryogenesis, senescence, T-cell development or neurogenesis. Interacts with the TP53 protein to control genes that are important in proliferation and in the DNA-damage response. Mechanistically, the interaction inhibits the DNA binding and transcriptional activity of TP53/p53. Part of the transcriptional network modulating regulatory T-cell development and controls the generation of the regulatory T-cell pool under homeostatic conditions. Functionally, (Microbial infection) Plays a positive role in viral cDNA synthesis. This is POZ-, AT hook-, and zinc finger-containing protein 1 (PATZ1) from Homo sapiens (Human).